The following is a 403-amino-acid chain: LIM/homeobox protein Lhx1 (403 aa).

LIM zinc-binding domains follow at residues 4–54 (CAGC…CKND) and 63–117 (CAGC…CKED). The span at 131 to 147 (ISVTGSDPSLSPESQDP) shows a compositional bias: polar residues. 2 disordered regions span residues 131-185 (ISVT…PRTT) and 318-366 (PAGT…SMHS). Residues 150–166 (DDAKDSESANVSDKEAG) show a composition bias toward basic and acidic residues. Positions 179–238 (RRGPRTTIKAKQLETLKAAFAATPKPTRHIREQLAQETGLNMRVIQVWFQNRRSKERRMK) form a DNA-binding region, homeobox.

As to quaternary structure, interacts with ldb1 via the tandem LIM domains. Both LIM domains are required for optimal binding and binding relieves the inhibitory effect of the LIM domains and activates lhx1. Binding to ldb1 also prevents degradation of ldb1 by rnf12. The stoichiometry of lhx1 and ldb1 is important for their function and an excess of ldb1 can inhibit lhx1 function. Interacts with the N-terminal region of rnf12 by a homeobox-dependent mechanism. Exhibits a biphasic expression pattern. Initially localized to the Spemann organizer region of gastrulae, leading to expression in prechordal mesoderm and notochord. In the second phase, expressed in the lateral mesoderm and neural plate, eventually concentrating in the pronephros and the CNS. Expressed in the pronephros primordium by late gastrula (stage 12.5) and becomes restricted to the tips of the tubules and ducts as kidney development progresses. In the CNS, becomes progressively recognizable in anatomically distinct structures during larval development. Within the forebrain, shows almost identical expression to lhx5 in the diencephalon, being expressed in alternating stripes to lhx2 and lhx9. Expressed in the diencephalic pretectum within prosomere 1, hypothalamus, ventral thalamus and zona limitans intrathalamica. In the telencephalon, the expression pattern is distinct from lhx5, being localized in the pallium and subpallium. Also expressed in the ventral territories of midbrain (mesencephalon) and hindbrain (rhombencephalon), being expressed in the mesencephalic tegmentum and hindbrain reticular formation. Also shows intense expression in the cerebellum including Purkinje cells.

It localises to the nucleus. Functionally, involved in the establishment of the body plan via the Spemann organizer during gastrulation. Transcriptional activator required to induce organizer gene expression downstream of siamois. Promotes head formation by binding to 5'-TAAT'-3' elements in the promoters of head organizer genes cer1 and gsc to stimulate expression. Binds as a complex with siamois and mix-A/mix.1 to the cer1 promoter, and with ldb1 and otx2 to the gsc promoter. Also involved in neural induction via the organizer, including a role in notochord formation. Acts synergistically with ldb1 and ssbp in subsequent axis formation. Involved in kidney development, acting synergistically with pax8 to establish the pronephric primordium in late gastrulae/early neurulae and with pax2 during pronephric morphogenesis in tailbud stages. Has a later role in mediating the activity of inhibitors of ventralization. The sequence is that of LIM/homeobox protein Lhx1 (lhx1) from Xenopus laevis (African clawed frog).